Here is a 1411-residue protein sequence, read N- to C-terminus: DNA-directed RNA polymerase subunit beta' (1411 aa).

4 residues coordinate Zn(2+): C70, C72, C85, and C88. Mg(2+) contacts are provided by D458, D460, and D462. C813, C887, C894, and C897 together coordinate Zn(2+). Positions 1391–1411 (AQAEVPELDGSSVTASDAAAD) are disordered.

This sequence belongs to the RNA polymerase beta' chain family. The RNAP catalytic core consists of 2 alpha, 1 beta, 1 beta' and 1 omega subunit. When a sigma factor is associated with the core the holoenzyme is formed, which can initiate transcription. Mg(2+) serves as cofactor. Requires Zn(2+) as cofactor.

The enzyme catalyses RNA(n) + a ribonucleoside 5'-triphosphate = RNA(n+1) + diphosphate. Its function is as follows. DNA-dependent RNA polymerase catalyzes the transcription of DNA into RNA using the four ribonucleoside triphosphates as substrates. This Verminephrobacter eiseniae (strain EF01-2) protein is DNA-directed RNA polymerase subunit beta'.